A 608-amino-acid chain; its full sequence is Elongation factor 4 (608 aa).

The tr-type G domain maps to 11-193; it reads DHIRNFSIVA…AIVNRLPPPK (183 aa). Residues 23-28 and 140-143 each bind GTP; these read DHGKST and NKID.

This sequence belongs to the TRAFAC class translation factor GTPase superfamily. Classic translation factor GTPase family. LepA subfamily.

It localises to the cell inner membrane. The enzyme catalyses GTP + H2O = GDP + phosphate + H(+). Functionally, required for accurate and efficient protein synthesis under certain stress conditions. May act as a fidelity factor of the translation reaction, by catalyzing a one-codon backward translocation of tRNAs on improperly translocated ribosomes. Back-translocation proceeds from a post-translocation (POST) complex to a pre-translocation (PRE) complex, thus giving elongation factor G a second chance to translocate the tRNAs correctly. Binds to ribosomes in a GTP-dependent manner. This chain is Elongation factor 4, found in Agrobacterium fabrum (strain C58 / ATCC 33970) (Agrobacterium tumefaciens (strain C58)).